A 21-amino-acid polypeptide reads, in one-letter code: Cupiennin-6e (21 aa).

Serine 21 is subject to Serine amide.

In terms of tissue distribution, expressed by the venom gland.

The protein resides in the secreted. In Cupiennius salei (American wandering spider), this protein is Cupiennin-6e.